The primary structure comprises 139 residues: 6,7-dimethyl-8-ribityllumazine synthase (139 aa).

Residues F13, 45–47 (VFD), and 69–71 (AVI) contribute to the 5-amino-6-(D-ribitylamino)uracil site. 74 to 75 (AT) is a (2S)-2-hydroxy-3-oxobutyl phosphate binding site. The active-site Proton donor is the H77. A 5-amino-6-(D-ribitylamino)uracil-binding site is contributed by L102. R117 is a binding site for (2S)-2-hydroxy-3-oxobutyl phosphate.

This sequence belongs to the DMRL synthase family.

It carries out the reaction (2S)-2-hydroxy-3-oxobutyl phosphate + 5-amino-6-(D-ribitylamino)uracil = 6,7-dimethyl-8-(1-D-ribityl)lumazine + phosphate + 2 H2O + H(+). It participates in cofactor biosynthesis; riboflavin biosynthesis; riboflavin from 2-hydroxy-3-oxobutyl phosphate and 5-amino-6-(D-ribitylamino)uracil: step 1/2. In terms of biological role, catalyzes the formation of 6,7-dimethyl-8-ribityllumazine by condensation of 5-amino-6-(D-ribitylamino)uracil with 3,4-dihydroxy-2-butanone 4-phosphate. This is the penultimate step in the biosynthesis of riboflavin. In Methanothermobacter thermautotrophicus (strain ATCC 29096 / DSM 1053 / JCM 10044 / NBRC 100330 / Delta H) (Methanobacterium thermoautotrophicum), this protein is 6,7-dimethyl-8-ribityllumazine synthase.